The sequence spans 256 residues: Nuclear shuttle protein (256 aa).

Over residues 1–16 (MYSTSNRRGRSQTQRG) the composition is skewed to polar residues. The segment at 1–46 (MYSTSNRRGRSQTQRGSHVRRTGVKRSYGAARGDDRRRPNVVSKTQ) is disordered. The Bipartite nuclear localization signal motif lies at 21–42 (RTGVKRSYGAARGDDRRRPNVV). The short motif at 81 to 96 (SYVKTVPNRTRTYIKL) is the Nuclear localization signal element. The interaction with Arabidopsis thaliana NSI protein stretch occupies residues 150 to 187 (ELFGARIHCHGNLSVVPALKDRYYIRHVTKRVVSLEKD). Residues 177 to 198 (VTKRVVSLEKDTLLIDLHGTTQ) carry the Nuclear export signal motif.

This sequence belongs to the begomovirus nuclear shuttle protein family. In terms of assembly, binds to single-stranded and double-stranded viral DNA. Interacts with the host nuclear shuttle interacting (NSI) protein. This interaction may allow NSP to recruit NSI monomers to the viral genome and thus regulate nuclear export of viral genome by NSP.

It localises to the host nucleus. The protein localises to the host cytoplasm. Its subcellular location is the host cell membrane. In terms of biological role, binds to the genomic viral ssDNA, shuttles it into and out of the cell nucleus. Begomoviruses use 2 proteins to transport their DNA from cell to cell. The nuclear shuttle protein (NSP) shuttles it between nucleus and cytoplasm and the movement protein (MP) probably transports the DNA-NSP complex to the cell periphery and facilitates movement across the cell wall. This chain is Nuclear shuttle protein, found in Squash leaf curl virus (SLCV).